Here is a 199-residue protein sequence, read N- to C-terminus: MNVKSTNISWHRALVDREMREKLLGQNGILIWFTGLSGSGKSTIASELEMRLYNMGRLTYLLDGDNVRHGLNSNLGFTKEDRIENIRRTAEVCKLFVDSGIITISTFISPFKDDRDKVRKLLGKDFVEVYVDCPLEVCESRDPKGIYKKARNGEIKDFTGVDSPYEVPDNPEIVVSTNLDTVQQCVNKILDFLSCKVQE.

35 to 42 provides a ligand contact to ATP; sequence GLSGSGKS. The Phosphoserine intermediate role is filled by S109.

This sequence belongs to the APS kinase family.

It catalyses the reaction adenosine 5'-phosphosulfate + ATP = 3'-phosphoadenylyl sulfate + ADP + H(+). It participates in sulfur metabolism; hydrogen sulfide biosynthesis; sulfite from sulfate: step 2/3. Functionally, catalyzes the synthesis of activated sulfate. This Clostridium kluyveri (strain ATCC 8527 / DSM 555 / NBRC 12016 / NCIMB 10680 / K1) protein is Adenylyl-sulfate kinase.